The chain runs to 1674 residues: Maestro heat-like repeat-containing protein family member 2A (1674 aa).

Residues 1–26 (MTEAITEAAVASSEEVSEERDDLGPL) are disordered. HEAT repeat units lie at residues 73 to 96 (ATTE…ISTQ), 97 to 133 (RKVN…EMRE), 195 to 234 (MPYM…TVQF), 254 to 292 (LKVF…LLLP), 382 to 419 (SYPK…ADEP), 424 to 461 (RAIY…CGYQ), 573 to 612 (PAPQ…SIAP), 615 to 641 (ADMW…DQKA), 642 to 679 (WEDK…SFDS), 739 to 776 (KTVL…ETVK), 993 to 1030 (GQFG…LHAS), 1221 to 1263 (DPLM…SHRP), 1381 to 1420 (EKLL…GAPK), and 1627 to 1674 (LDFP…QGMS).

The sequence is that of Maestro heat-like repeat-containing protein family member 2A (MROH2A) from Homo sapiens (Human).